The primary structure comprises 115 residues: LSM complex subunit LSM7 (115 aa).

Residues 1–10 (MHQQHSKSEN) are compositionally biased toward basic and acidic residues. Positions 1–23 (MHQQHSKSENKPQQQRKKFEGPK) are disordered. Positions 25-108 (EAILDLAKYK…LVSLSSAEGS (84 aa)) constitute a Sm domain.

Belongs to the snRNP Sm proteins family. As to quaternary structure, component of the heptameric LSM1-LSM7 complex that forms a seven-membered ring structure with a donut shape. The LSm subunits are arranged in the order LSM1, LSM2, LSM3, LSM6, LSM5, LSM7 and LSM4. Except for LSM1, where a C-terminal helix crosses the ring structure to form additional interactions with LSM3 and LSM6, each subunit interacts only with its two neighboring subunits. The LSM1-LSM7 complex interacts with PAT1; within the complex PAT1 has direct interactions with LSM2 and LSM3. The LSM1-LSM7 complex interacts with XRN1. Component of the heptameric LSM2-LSM8 complex that forms a seven-membered ring structure with a donut shape; an RNA strand can pass through the hole in the center of the ring structure. The LSm subunits are arranged in the order LSM8, LSM2, LSM3, LSM6, LSM5, LSM7 and LSM4. Component of the spliceosome U4/U6-U5 tri-snRNP complex composed of the U4, U6 and U5 snRNAs and at least PRP3, PRP4, PRP6, PRP8, PRP18, PRP31, PRP38, SNU13, SNU23, SNU66, SNU114, SPP381, SMB1, SMD1, SMD2, SMD3, SMX2, SMX3, LSM2, LSM3, LSM4, LSM5, LSM6, LSM7, LSM8, BRR2 and DIB1. May be found in a complex comprising LSM2-LSM7 without LSM1 or LSM8; the complex associates with pre-P RNA and snoRNA SNR5.

It is found in the nucleus. It localises to the nucleolus. The protein localises to the cytoplasm. In terms of biological role, component of LSm protein complexes, which are involved in RNA processing and may function in a chaperone-like manner. Component of the cytoplasmic LSM1-LSM7 complex which is involved in mRNA degradation by activating the decapping step. Together with PAT1, the LSM1-LSM7 complex binds to osmotic stress-activated mRNAs to attenuate the osmotic stress response, probably by limiting ribosome access to the mRNA and consequently translation. Component of the nuclear LSM2-LSM8 complex, which is involved in spliceosome assembly. The LSM2-LSM8 complex plays a role in the biogenesis of the spliceosomal U4/U6-U5 tri-snRNP complex by accelerating PRP24-mediated annealing of U4/U6 di-snRNA. The LSM2-LSM8 complex binds U6 snRNA terminating with a non-cyclic 3' phosphate group. LSM2-LSM8 is probably also involved in degradation of nuclear pre-mRNA by targeting them for decapping. LSM2-LSM8 could be involved in processing of pre-tRNAs, pre-rRNAs and U3 snoRNA, although involvement may be indirect. In a complex that probably contains LSM2-LSM7, but not LSM1 or LSM8, associates with the precursor of the RNA component of RNase P (pre-P RNA) and may be involved in maturing pre-P RNA; the complex also associates with snoRNA SNR5. In Saccharomyces cerevisiae (strain ATCC 204508 / S288c) (Baker's yeast), this protein is LSM complex subunit LSM7 (LSM7).